We begin with the raw amino-acid sequence, 400 residues long: uncharacterized protein (400 aa).

An ATP-binding site is contributed by 36–43 (GSINSGKT).

The protein belongs to the archaeal ATPase family.

This is an uncharacterized protein from Methanocaldococcus jannaschii (strain ATCC 43067 / DSM 2661 / JAL-1 / JCM 10045 / NBRC 100440) (Methanococcus jannaschii).